Here is a 160-residue protein sequence, read N- to C-terminus: Type IV major fimbrial protein FimA (160 aa).

A propeptide spans 1–7 (leader sequence); the sequence is MKSLQKG. Phe8 carries the post-translational modification N-methylphenylalanine. A helical membrane pass occupies residues 8-28; the sequence is FTLIELMIVVAIIGILAAFAI. Cys63 and Cys106 form a disulfide bridge.

The protein belongs to the N-Me-Phe pilin family. The pili are polar flexible filaments of about 5.4 nanometers diameter and 2.5 micrometers average length; they consist of only a single polypeptide chain arranged in a helical configuration of five subunits per turn in the assembled pilus.

It is found in the fimbrium. The protein resides in the membrane. In terms of biological role, major component of the type IV fimbriae that plays an essential role in twitching motility, natural transformation, and protease secretion. The protein is Type IV major fimbrial protein FimA (fimA) of Dichelobacter nodosus (Bacteroides nodosus).